Here is a 900-residue protein sequence, read N- to C-terminus: Periodic tryptophan protein 2 (900 aa).

WD repeat units follow at residues 10-47, 50-89, 91-129, 139-178, and 185-229; these read GAPYRGGNAVITKNTQLISPVGNRVSVTDLSKNHSVTL, ETSTNICRLASSPDGTFLLAVDEQNRCLFINLPRRVVLHR, TFKDKVGALKFSPNGKFIAVGIGKLVEIWRSPGFRRAVL, NSDDKVVSLEWSLDSDYLLVGSRDLAARLFCVRKLKGVLN, and GHRD…VKMD. The segment at 228-284 is disordered; it reads MDESEDGHSEPPSPVTPDRADEVMVENGGGVGTELKKRKEYDGKGLESDEEGDDDDE. The segment covering 261 to 274 has biased composition (basic and acidic residues); the sequence is ELKKRKEYDGKGLE. Ser-275 carries the post-translational modification Phosphoserine. A compositionally biased stretch (acidic residues) spans 275-284; it reads SDEEGDDDDE. 8 WD repeats span residues 302–341, 344–384, 387–426, 429–468, 472–512, 515–554, 557–596, and 619–658; these read QASAKVTACDYHQGLDMVVVGFSNGVFGLYQMPDFICIHL, ISRQ…YILK, GHYFDVNCVTYSPDSQLLATGADDNKVKVWNVMSGTCFIT, EHTNAVTALHFMADNHSLLSASLDGTVRAWDFKRYKNYKT, PTPR…IKDI, GHEAPVHGLMFSPLTQLLASSSWDYTVRLWDVFASKGTVE, RHNHDVLTVAFRPDGKQLASSTLDGQINFWDTIEGVLMYT, and SSGKCFTTLCYSADGGYILAAGTSRYICMYDIADQVLLRR. The segment at 684–720 is disordered; it reads PIDLIDDDNSDEEGGIDKQSRGNLGYDLPGSRPNRGR. The span at 687-697 shows a compositional bias: acidic residues; the sequence is LIDDDNSDEEG. One copy of the WD 14 repeat lies at 720–759; that stretch reads RPIIRTKSLSIAPTGRSFAAATTEGVLIFSIDDTFIFDPT.

It belongs to the WD repeat PWP2 family. As to quaternary structure, component of the ribosomal small subunit (SSU) processome. Interacts with TBP1 in the nucleus. Expressed constitutively and ubiquitously; observed in seeds, seedlings, roots, leaves, stems, flowers and siliques.

It localises to the nucleus. It is found in the nucleolus. Functionally, involved in nucleolar processing of pre-18S ribosomal RNA. Plays a role early in ribosome biogenesis, especially in the maturation of 5.8S rRNA. Required for guard cell functions. In Arabidopsis thaliana (Mouse-ear cress), this protein is Periodic tryptophan protein 2.